Reading from the N-terminus, the 511-residue chain is V-type proton ATPase subunit B, brain isoform (511 aa).

R400 contributes to the ATP binding site.

This sequence belongs to the ATPase alpha/beta chains family. V-ATPase is a heteromultimeric enzyme made up of two complexes: the ATP-hydrolytic V1 complex and the proton translocation V0 complex. The V1 complex consists of three catalytic AB heterodimers that form a heterohexamer, three peripheral stalks each consisting of EG heterodimers, one central rotor including subunits D and F, and the regulatory subunits C and H. The proton translocation complex V0 consists of the proton transport subunit a, a ring of proteolipid subunits c9c'', rotary subunit d, subunits e and f, and the accessory subunits ATP6AP1/Ac45 and ATP6AP2/PRR. Kidney; localizes to early distal nephron, encompassing thick ascending limbs and distal convoluted tubules (at protein level).

The protein localises to the apical cell membrane. It localises to the melanosome. It is found in the cytoplasm. Its subcellular location is the cytoplasmic vesicle. The protein resides in the secretory vesicle. The protein localises to the synaptic vesicle membrane. It localises to the clathrin-coated vesicle membrane. Its function is as follows. Non-catalytic subunit of the V1 complex of vacuolar(H+)-ATPase (V-ATPase), a multisubunit enzyme composed of a peripheral complex (V1) that hydrolyzes ATP and a membrane integral complex (V0) that translocates protons. V-ATPase is responsible for acidifying and maintaining the pH of intracellular compartments and in some cell types, is targeted to the plasma membrane, where it is responsible for acidifying the extracellular environment. In renal intercalated cells, can partially compensate the lack of ATP6V1B1 and mediate secretion of protons (H+) into the urine under base-line conditions but not in conditions of acid load. In Homo sapiens (Human), this protein is V-type proton ATPase subunit B, brain isoform (ATP6V1B2).